We begin with the raw amino-acid sequence, 571 residues long: Folylpolyglutamate synthase (571 aa).

An ATP-binding site is contributed by 122-125 (GKGS). Ser-146, Glu-215, and His-243 together coordinate Mg(2+). The ATP site is built by Arg-363 and Asp-385.

This sequence belongs to the folylpolyglutamate synthase family. The cofactor is a monovalent cation. In terms of tissue distribution, expressed in both shoots and roots, but expression in roots is higher compared with shoots. Distinct expression in the quiescent center (QC) region of the root tip. Also expressed in vascular tissues of the cotyledons and hypocotyls, and the first true leaves of 7 days old seedlings.

The protein localises to the plastid. The protein resides in the chloroplast. It catalyses the reaction (6S)-5,6,7,8-tetrahydrofolyl-(gamma-L-Glu)(n) + L-glutamate + ATP = (6S)-5,6,7,8-tetrahydrofolyl-(gamma-L-Glu)(n+1) + ADP + phosphate + H(+). Its pathway is cofactor biosynthesis; tetrahydrofolylpolyglutamate biosynthesis. In terms of biological role, catalyzes conversion of folates to polyglutamate derivatives allowing concentration of folate compounds in the cell and the intracellular retention of these cofactors, which are important substrates for most of the folate-dependent enzymes that are involved in one-carbon transfer reactions involved in purine, pyrimidine and amino acid synthesis. Essential for organellar and whole-plant folate homeostasis. Required for postembryonic root development. Generates polyglutamylated folate cofactors to support C1 metabolism required for meristem maintenance and cell expansion during postembryonic root development. The chain is Folylpolyglutamate synthase from Arabidopsis thaliana (Mouse-ear cress).